The following is a 313-amino-acid chain: tRNA-cytidine(32) 2-sulfurtransferase (313 aa).

The PP-loop motif motif lies at 60–65 (SGGKDS). [4Fe-4S] cluster is bound by residues C135, C138, and C226.

It belongs to the TtcA family. In terms of assembly, homodimer. Mg(2+) serves as cofactor. It depends on [4Fe-4S] cluster as a cofactor.

The protein localises to the cytoplasm. It catalyses the reaction cytidine(32) in tRNA + S-sulfanyl-L-cysteinyl-[cysteine desulfurase] + AH2 + ATP = 2-thiocytidine(32) in tRNA + L-cysteinyl-[cysteine desulfurase] + A + AMP + diphosphate + H(+). Its pathway is tRNA modification. Catalyzes the ATP-dependent 2-thiolation of cytidine in position 32 of tRNA, to form 2-thiocytidine (s(2)C32). The sulfur atoms are provided by the cysteine/cysteine desulfurase (IscS) system. This is tRNA-cytidine(32) 2-sulfurtransferase from Delftia acidovorans (strain DSM 14801 / SPH-1).